Reading from the N-terminus, the 327-residue chain is Glycerol-3-phosphate dehydrogenase [NAD(P)+] (327 aa).

Residues F13, R34, and K107 each contribute to the NADPH site. 2 residues coordinate sn-glycerol 3-phosphate: K107 and G135. A139 provides a ligand contact to NADPH. 5 residues coordinate sn-glycerol 3-phosphate: K190, D243, S253, R254, and N255. The Proton acceptor role is filled by K190. R254 is a binding site for NADPH. The NADPH site is built by V276 and E277.

This sequence belongs to the NAD-dependent glycerol-3-phosphate dehydrogenase family.

The protein resides in the cytoplasm. It carries out the reaction sn-glycerol 3-phosphate + NAD(+) = dihydroxyacetone phosphate + NADH + H(+). The enzyme catalyses sn-glycerol 3-phosphate + NADP(+) = dihydroxyacetone phosphate + NADPH + H(+). The protein operates within membrane lipid metabolism; glycerophospholipid metabolism. Catalyzes the reduction of the glycolytic intermediate dihydroxyacetone phosphate (DHAP) to sn-glycerol 3-phosphate (G3P), the key precursor for phospholipid synthesis. The chain is Glycerol-3-phosphate dehydrogenase [NAD(P)+] from Rhizobium johnstonii (strain DSM 114642 / LMG 32736 / 3841) (Rhizobium leguminosarum bv. viciae).